The primary structure comprises 510 residues: Maturase K (510 aa).

This sequence belongs to the intron maturase 2 family. MatK subfamily.

It localises to the plastid. Its subcellular location is the chloroplast. Functionally, usually encoded in the trnK tRNA gene intron. Probably assists in splicing its own and other chloroplast group II introns. The sequence is that of Maturase K from Taxus cuspidata (Japanese yew).